Reading from the N-terminus, the 207-residue chain is MIINLADVEQLSIKAESVDFQYDMYKKVCEKFTDFEQSVLWQCMEAKKNEALHKHLNEIIKKHLTKSPYQLYRGISKSTKELIKDLQVGEVFSTNRVDSFTTSLHTACSFSYAEYFTETILRLKTDKAFNYSDHISDIILSSPNTEFKYTYEDTDGLDSERTDNLMMIVREQEWMIPIGKYKITSISKEKLHDSFGTFKVYDIEVVE.

Residue Arg73 coordinates NAD(+). Glu173 is a catalytic residue.

This sequence belongs to the Tevenvirinae NAD--protein ADP-ribosyltransferase modA family.

Its subcellular location is the virion. It carries out the reaction L-arginyl-[protein] + NAD(+) = N(omega)-(ADP-D-ribosyl)-L-arginyl-[protein] + nicotinamide + H(+). Its function is as follows. ADP-ribosyltransferase that regulates transcription by ADP-ribosylation of host ribosomal protein S1. Additional identified targets include proteins involved in either translation or cellular metabolism such as elongation factor-Tu or trigger factor. Also reprograms the host's gene-expression system by RNAylating host ribosomal protein S1. ModB can attach NAD-capped RNAs to target proteins post-transcriptionally resulting in covalent RNA-protein conjugates. This is NAD--protein ADP-ribosyltransferase modB from Enterobacteria phage T4 (Bacteriophage T4).